The chain runs to 971 residues: uncharacterized protein (971 aa).

The next 13 membrane-spanning stretches (helical) occupy residues 11–31 (WLLKIGIILVLAFLGLFGIIF), 516–536 (FASSFIALGVIILLATIALGI), 547–567 (LALALSAISSLAFFSAVGGVV), 569–589 (VFSFVGIFFVVAVNIINLITL), 615–635 (FFTMIETHICWLLSALVVIYL), 651–671 (AITSYFLNYGLGVILVWLFVS), 727–747 (LLFIWLTVLAFGVVMLGLYLG), 763–783 (STGIMLGVGVISLLYLLYSLP), 795–815 (IALILLAAGLFGAMYLANFIF), 817–837 (IDQSTIQLIIFVYLFWLFFQA), 878–898 (IGSSVLILLFIVYAAFNFGGI), 900–920 (GTINLVIFYLIAIVALFSVFV), and 923–943 (LPLFSFGLINGWLSPYNYVQI).

It is found in the cell membrane. This is an uncharacterized protein from Mycoplasma pneumoniae (strain ATCC 29342 / M129 / Subtype 1) (Mycoplasmoides pneumoniae).